The sequence spans 161 residues: Cyclic pyranopterin monophosphate synthase (161 aa).

Substrate-binding positions include 75-77 and 114-115; these read MCH and ME. D129 is a catalytic residue.

This sequence belongs to the MoaC family. Homohexamer; trimer of dimers.

It catalyses the reaction (8S)-3',8-cyclo-7,8-dihydroguanosine 5'-triphosphate = cyclic pyranopterin phosphate + diphosphate. Its pathway is cofactor biosynthesis; molybdopterin biosynthesis. Functionally, catalyzes the conversion of (8S)-3',8-cyclo-7,8-dihydroguanosine 5'-triphosphate to cyclic pyranopterin monophosphate (cPMP). The protein is Cyclic pyranopterin monophosphate synthase of Staphylococcus carnosus (strain TM300).